A 616-amino-acid chain; its full sequence is Schwannomin-interacting protein 1 homolog (616 aa).

Acidic residues predominate over residues 38 to 50; sequence ESDLTDSDREDDP. Disordered regions lie at residues 38–71, 204–251, and 292–320; these read ESDLTDSDREDDPTFPSKMAKESGSETFKNGQDS, LKQT…PDTF, and SSLEIGGSGSQQNLDEDNNKVASRKYSNQ. Polar residues-rich tracts occupy residues 62–71 and 204–217; these read SETFKNGQDS and LKQTSSTRLSGNST. Residues 550-594 are a coiled coil; that stretch reads LQLLVNNLQEYIENLNVTLLESLKERDDLNSDQDDILHDLEKINN.

The protein belongs to the SCHIP1 family. Interacts with ex; the interaction results in recruitment of Schip1 to the apical cell membrane. Interacts with Tao; the interaction enhances Tao kinase activity. Interacts with Mer. In terms of tissue distribution, in eye disks of the third instar larvae, expressed in all cells (at protein level).

Its subcellular location is the cell junction. It is found in the adherens junction. The protein resides in the apical cell membrane. Functionally, regulator of the Hippo/SWH (Sav/Wts/Hpo) signaling pathway, a signaling pathway that plays a pivotal role in organ size control and tumor suppression by restricting proliferation and promoting apoptosis. The core of this pathway is composed of a kinase cascade wherein Hippo (hpo), in complex with its regulatory protein Salvador (sav), phosphorylates and activates Warts (wts) in complex with its regulatory protein Mats, which in turn phosphorylates and inactivates the Yorkie (yki) oncoprotein. Schip1 promotes kinase activity of Tao and enhances phosphorylation of hpo by Tao. The sequence is that of Schwannomin-interacting protein 1 homolog from Drosophila melanogaster (Fruit fly).